We begin with the raw amino-acid sequence, 277 residues long: Glutamate racemase (277 aa).

Substrate-binding positions include 25-26 and 57-58; these read DS and YG. The active-site Proton donor/acceptor is Cys89. A substrate-binding site is contributed by 90–91; that stretch reads NT. Cys204 (proton donor/acceptor) is an active-site residue. 205–206 lines the substrate pocket; sequence TH.

The protein belongs to the aspartate/glutamate racemases family.

The catalysed reaction is L-glutamate = D-glutamate. It participates in cell wall biogenesis; peptidoglycan biosynthesis. In terms of biological role, provides the (R)-glutamate required for cell wall biosynthesis. This Brucella ovis (strain ATCC 25840 / 63/290 / NCTC 10512) protein is Glutamate racemase.